We begin with the raw amino-acid sequence, 290 residues long: MFHGSMVAMVTPMHPDGAVDEVSLARLVDYHVEHGTDAIVAVGTTGESATLDYDEHCHVMRKVVEAARGRIPVIGGTGANSTWEAIKLTRCAMEGGCDATLLVVPYYNKPTQDGLYRHFAAIADAVAIPQILYNVPGRTACDLLPDTVDRLADISNIVGIKEASTIERVHDLVERCSDRLDVFSGEDGLSREAVLAGAKGVISVTANVAPQQMHDMVAAALRGDEEEASRIDARLAALHSALFLESNPIPVKWAVSQMGLCGPSIRLPLTELSEQHHETVRQAMKLAGSL.

Pyruvate is bound at residue Thr-45. Tyr-133 serves as the catalytic Proton donor/acceptor. Lys-161 functions as the Schiff-base intermediate with substrate in the catalytic mechanism. Residue Ile-202 participates in pyruvate binding.

The protein belongs to the DapA family. Homotetramer; dimer of dimers.

Its subcellular location is the cytoplasm. The catalysed reaction is L-aspartate 4-semialdehyde + pyruvate = (2S,4S)-4-hydroxy-2,3,4,5-tetrahydrodipicolinate + H2O + H(+). The protein operates within amino-acid biosynthesis; L-lysine biosynthesis via DAP pathway; (S)-tetrahydrodipicolinate from L-aspartate: step 3/4. In terms of biological role, catalyzes the condensation of (S)-aspartate-beta-semialdehyde [(S)-ASA] and pyruvate to 4-hydroxy-tetrahydrodipicolinate (HTPA). This Alkalilimnicola ehrlichii (strain ATCC BAA-1101 / DSM 17681 / MLHE-1) protein is 4-hydroxy-tetrahydrodipicolinate synthase.